Here is a 309-residue protein sequence, read N- to C-terminus: E3 ubiquitin-protein ligase SINAT5 (309 aa).

An RING-type zinc finger spans residues 46-82 (CPVCTNSMYPPIHQCHNGHTLCSTCKSRVHNRCPTCR). The interval 96 to 289 (VAESLELPCK…KELKLRVTGR (194 aa)) is SBD. The SIAH-type zinc finger occupies 99-159 (SLELPCKYYN…LVAHLRDDHK (61 aa)). Cys104, Cys111, His123, Cys127, Cys134, Cys141, His153, and His158 together coordinate Zn(2+).

This sequence belongs to the SINA (Seven in absentia) family. In terms of assembly, homodimer; homodimerization is essential for its function. Interacts with UBC28 and NAC021/NAC022. Interacts with SINAT6. Interacts with ATG6 and TRAF1A. Interacts with WAV3. Interacts with FREE1. Expressed at low level in the vascular tissue of mature roots. Expressed in lateral roots and in elongation zone of the main root upon stimulation by auxin. Colocalizes with NAC021/NAC022.

The protein localises to the nucleus. Its subcellular location is the cytoplasm. The catalysed reaction is S-ubiquitinyl-[E2 ubiquitin-conjugating enzyme]-L-cysteine + [acceptor protein]-L-lysine = [E2 ubiquitin-conjugating enzyme]-L-cysteine + N(6)-ubiquitinyl-[acceptor protein]-L-lysine.. The protein operates within protein modification; protein ubiquitination. In terms of biological role, E3 ubiquitin-protein ligase that mediates ubiquitination and subsequent proteasomal degradation of target proteins. E3 ubiquitin ligases accept ubiquitin from an E2 ubiquitin-conjugating enzyme in the form of a thioester and then directly transfers the ubiquitin to targeted substrates. Mediates the ubiquitination and proteasomal-dependent degradation of NAC021/NAC022, a transcription activator that functions downstream of the auxin signals, thereby acting as a down-regulator of auxin signals. Involved in the formation of lateral roots. Is antagonist to SINAT1, SINAT2, SINAT3 and SINAT4 by suppressing FREE1 ubiquitination and degradation mediated by SINAT1, SINAT2, SINAT3 and SINAT4, and promoting FREE1 accumulation. This Arabidopsis thaliana (Mouse-ear cress) protein is E3 ubiquitin-protein ligase SINAT5.